We begin with the raw amino-acid sequence, 186 residues long: Sec-independent protein translocase protein TatB (186 aa).

Residues 1 to 21 (MFDIGFSELILLMVLGLVVLG) traverse the membrane as a helical segment. The disordered stretch occupies residues 162-186 (LSSYYPPDDIEIAPASKSQSSKTKS). A compositionally biased stretch (polar residues) spans 177 to 186 (SKSQSSKTKS).

Belongs to the TatB family. The Tat system comprises two distinct complexes: a TatABC complex, containing multiple copies of TatA, TatB and TatC subunits, and a separate TatA complex, containing only TatA subunits. Substrates initially bind to the TatABC complex, which probably triggers association of the separate TatA complex to form the active translocon.

The protein localises to the cell inner membrane. Part of the twin-arginine translocation (Tat) system that transports large folded proteins containing a characteristic twin-arginine motif in their signal peptide across membranes. Together with TatC, TatB is part of a receptor directly interacting with Tat signal peptides. TatB may form an oligomeric binding site that transiently accommodates folded Tat precursor proteins before their translocation. This chain is Sec-independent protein translocase protein TatB, found in Haemophilus influenzae (strain 86-028NP).